The primary structure comprises 611 residues: Alpha-1,2-mannosyltransferase ALG9 (611 aa).

Basic residues predominate over residues 1-10; the sequence is MASRGARQRL. The disordered stretch occupies residues 1-23; sequence MASRGARQRLKGSGASSGDTAPA. Topologically, residues 1–135 are lumenal; that stretch reads MASRGARQRL…FHARILQTNK (135 aa). Residue Asn-77 is glycosylated (N-linked (GlcNAc...) asparagine). A helical membrane pass occupies residues 136-156; that stretch reads ILVFYFLRCLLAFVSCICELY. Residues 157-171 lie on the Cytoplasmic side of the membrane; the sequence is FYKAVCKKFGLHVSR. The chain crosses the membrane as a helical span at residues 172-192; that stretch reads MMLAFLVLSTGMFCSSSAFLP. The Lumenal segment spans residues 193–213; that stretch reads SSFCMYTTLIAMTGWYMDKTS. The chain crosses the membrane as a helical span at residues 214 to 234; sequence IAVLGVAAGAILGWPFSAALG. Residues 235–249 are Cytoplasmic-facing; the sequence is LPIAFDLLVMKHRWK. Residues 250–270 traverse the membrane as a helical segment; the sequence is SFFHWSLMALILFLVPVVVID. Topologically, residues 271-304 are lumenal; that stretch reads SYYYGKLVIAPLNIVLYNVFTPHGPDLYGTEPWY. The chain crosses the membrane as a helical span at residues 305 to 325; that stretch reads FYLINGFLNFNVAFALALLVL. The Cytoplasmic portion of the chain corresponds to 326–342; sequence PLTSLMEYLLQRFHVQN. A helical membrane pass occupies residues 343 to 363; sequence LGHPYWLTLAPMYIWFIIFFI. The Lumenal segment spans residues 364–370; it reads QPHKEER. The chain crosses the membrane as a helical span at residues 371–391; that stretch reads FLFPVYPLICLCGAVALSALQ. Residues 392–405 lie on the Cytoplasmic side of the membrane; sequence KCYHFVFQRYRLEH. Residues 406–426 traverse the membrane as a helical segment; that stretch reads YTVTSNWLALGTVFLFGLLSF. Residues 427–611 lie on the Lumenal side of the membrane; sequence SRSVALFRGY…AKQIRKKSGG (185 aa). A glycan (N-linked (GlcNAc...) asparagine) is linked at Asn-593.

It belongs to the glycosyltransferase 22 family. As to expression, ubiquitously expressed; with highest levels in heart, liver and pancreas.

Its subcellular location is the endoplasmic reticulum membrane. The catalysed reaction is an alpha-D-Man-(1-&gt;2)-alpha-D-Man-(1-&gt;2)-alpha-D-Man-(1-&gt;3)-[alpha-D-Man-(1-&gt;3)-alpha-D-Man-(1-&gt;6)]-beta-D-Man-(1-&gt;4)-beta-D-GlcNAc-(1-&gt;4)-alpha-D-GlcNAc-diphospho-di-trans,poly-cis-dolichol + a di-trans,poly-cis-dolichyl beta-D-mannosyl phosphate = an alpha-D-Man-(1-&gt;2)-alpha-D-Man-(1-&gt;2)-alpha-D-Man-(1-&gt;3)-[alpha-D-Man-(1-&gt;2)-alpha-D-Man-(1-&gt;3)-alpha-D-Man-(1-&gt;6)]-beta-D-Man-(1-&gt;4)-beta-D-GlcNAc-(1-&gt;4)-alpha-D-GlcNAc-diphospho-di-trans,poly-cis-dolichol + a di-trans,poly-cis-dolichyl phosphate + H(+). It catalyses the reaction an alpha-D-Man-(1-&gt;2)-alpha-D-Man-(1-&gt;2)-alpha-D-Man-(1-&gt;3)-[alpha-D-Man-(1-&gt;2)-alpha-D-Man-(1-&gt;3)-[alpha-D-Man-(1-&gt;6)]-alpha-D-Man-(1-&gt;6)]-beta-D-Man-(1-&gt;4)-beta-D-GlcNAc-(1-&gt;4)-alpha-D-GlcNAc-diphospho-di-trans,poly-cis-dolichol + a di-trans,poly-cis-dolichyl beta-D-mannosyl phosphate = an alpha-D-Man-(1-&gt;2)-alpha-D-Man-(1-&gt;2)-alpha-D-Man-(1-&gt;3)-[alpha-D-Man-(1-&gt;2)-alpha-D-Man-(1-&gt;3)-[alpha-D-Man-(1-&gt;2)-alpha-D-Man-(1-&gt;6)]-alpha-D-Man-(1-&gt;6)]-beta-D-Man-(1-&gt;4)-beta-D-GlcNAc-(1-&gt;4)-alpha-D-GlcNAc-diphospho-di-trans,poly-cis-dolichol + a di-trans,poly-cis-dolichyl phosphate + H(+). The protein operates within protein modification; protein glycosylation. Its function is as follows. Mannosyltransferase that operates in the biosynthetic pathway of dolichol-linked oligosaccharides, the glycan precursors employed in protein asparagine (N)-glycosylation. The assembly of dolichol-linked oligosaccharides begins on the cytosolic side of the endoplasmic reticulum membrane and finishes in its lumen. The sequential addition of sugars to dolichol pyrophosphate produces dolichol-linked oligosaccharides containing fourteen sugars, including two GlcNAcs, nine mannoses and three glucoses. Once assembled, the oligosaccharide is transferred from the lipid to nascent proteins by oligosaccharyltransferases. In the lumen of the endoplasmic reticulum, catalyzes the addition of the seventh and ninth alpha-1,2-linked mannose residues to Man(6)GlcNAc(2)-PP-dolichol and Man(8)GlcNAc(2)-PP-dolichol respectively. The chain is Alpha-1,2-mannosyltransferase ALG9 from Homo sapiens (Human).